A 663-amino-acid polypeptide reads, in one-letter code: DNA topoisomerase 4 subunit B (663 aa).

Residues Y7, N47, D74, 114 to 120 (GLHGVGA), and K341 contribute to the ATP site. Residues 386 to 416 (REAARKAREDARSGKKNKRKDTLLSGKLTPA) are disordered. Basic and acidic residues predominate over residues 387 to 398 (EAARKAREDARS). Residues 424-538 (NELYLVEGDS…AGRVFIALPP (115 aa)) form the Toprim domain. Positions 430, 503, and 505 each coordinate Mg(2+).

This sequence belongs to the type II topoisomerase family. ParE type 2 subfamily. Heterotetramer composed of ParC and ParE. The cofactor is Mg(2+). It depends on Mn(2+) as a cofactor. Ca(2+) is required as a cofactor.

It carries out the reaction ATP-dependent breakage, passage and rejoining of double-stranded DNA.. Its function is as follows. Topoisomerase IV is essential for chromosome segregation. It relaxes supercoiled DNA. Performs the decatenation events required during the replication of a circular DNA molecule. The polypeptide is DNA topoisomerase 4 subunit B (Staphylococcus aureus (strain Mu50 / ATCC 700699)).